The sequence spans 331 residues: Probable deacetylase MTH_1194 (331 aa).

His-118 acts as the Proton donor/acceptor in catalysis. Zn(2+) is bound by residues Asp-155, His-157, and Asp-244.

Belongs to the histone deacetylase family. Zn(2+) is required as a cofactor.

Functionally, probable deacetylase. The sequence is that of Probable deacetylase MTH_1194 from Methanothermobacter thermautotrophicus (strain ATCC 29096 / DSM 1053 / JCM 10044 / NBRC 100330 / Delta H) (Methanobacterium thermoautotrophicum).